The sequence spans 215 residues: MAKPLTERFFIPKEVKVMGRWSVEDVTVEDPSLKPYINLDARILPHSHGRYAKKPFGKANVHIVERLINKVMRSGASHYKAGGHFMRREHRSIMSKKMKAYEVVKEAFMIIERRTKQNPIQVLVKAIENSAPREDTTTIAFGGIRYHMSVDVSPLRRLDIALKNIALGASIKCYRNKTTYAQALAEEIIAAANKDPKSFAYSKKEEIERIAQSSR.

It belongs to the universal ribosomal protein uS7 family. As to quaternary structure, part of the 30S ribosomal subunit.

One of the primary rRNA binding proteins, it binds directly to 16S rRNA where it nucleates assembly of the head domain of the 30S subunit. Is located at the subunit interface close to the decoding center. This chain is Small ribosomal subunit protein uS7, found in Thermococcus kodakarensis (strain ATCC BAA-918 / JCM 12380 / KOD1) (Pyrococcus kodakaraensis (strain KOD1)).